The following is an 855-amino-acid chain: Nuclear valosin-containing protein-like (855 aa).

The interval 1-219 (MKPRPGVFVD…SLLESDKKRK (219 aa)) is interaction with RPL5. The Nucleolar localization signal motif lies at 49-52 (RRKR). Lys70 is modified (N6-acetyllysine). The segment at 83-234 (LAKRARQDEE…KGNKRKTENL (152 aa)) is disordered. The short motif at 85–88 (KRAR) is the Nuclear localization signal element. Positions 90–110 (DEEDEYTESYSDDDSNMEDYP) are enriched in acidic residues. 2 stretches are compositionally biased toward polar residues: residues 113 to 123 (QSANPMNSSLL) and 131 to 157 (SESVSTTPKWGQREATTSTPLLTSKTG). Ser133 carries the phosphoserine modification. Position 137 is a phosphothreonine (Thr137). Lys155 is modified (N6-acetyllysine). A Phosphoserine modification is found at Ser190. Residue Lys207 forms a Glycyl lysine isopeptide (Lys-Gly) (interchain with G-Cter in SUMO2) linkage. Phosphoserine is present on residues Ser210 and Ser214. Positions 217–228 (KRKGRAKGKGNK) are enriched in basic residues. A Nuclear localization signal motif is present at residues 217–231 (KRKGRAKGKGNKRKT). The interaction with WDR74 stretch occupies residues 266 to 473 (VGGNDATLKE…LTPGFVGADL (208 aa)). 304–311 (GPPGCGKT) is a binding site for ATP. The disordered stretch occupies residues 496–523 (QKKKPEIEGLPSEGDQEERLGAEPTSET). ATP is bound at residue 621-628 (GPPGCGKT).

Belongs to the AAA ATPase family. In terms of assembly, interacts with NCL/nucleolin. Isoform 1 and isoform 2 interact with TERT and isoform 1 exhibits a higher binding affinity for TERT compared to isoform 2. Isoform 1 interacts with MTREX in an ATP-dependent manner; the interaction is required to associate NVL with nuclear RNA exosome. Isoform 1 interacts with RPL5 in an ATP-dependent manner. Interacts with WDR74 (through WDR repeats); the interaction is independent of RNA or pre-60S ribosome particles.

It localises to the nucleus. It is found in the nucleolus. The protein localises to the nucleoplasm. Functionally, participates in the assembly of the telomerase holoenzyme and effecting of telomerase activity via its interaction with TERT. Involved in both early and late stages of the pre-rRNA processing pathways. Spatiotemporally regulates 60S ribosomal subunit biogenesis in the nucleolus. Catalyzes the release of specific assembly factors, such as WDR74, from pre-60S ribosomal particles through the ATPase activity. This chain is Nuclear valosin-containing protein-like, found in Mus musculus (Mouse).